The sequence spans 359 residues: Type-1 angiotensin II receptor (359 aa).

Residues 1–25 (MILNSSTEDGIKRIQDDCPKAGRHN) are Extracellular-facing. An N-linked (GlcNAc...) asparagine glycan is attached at Asn4. The angiotensin II site is built by Gln15 and Asp17. Disulfide bonds link Cys18–Cys274 and Cys101–Cys180. A helical membrane pass occupies residues 26-55 (YIFIMIPTLYSIIFVVGLFGNSLVVIVIYF). At 56-61 (YMKLKT) the chain is on the cytoplasmic side. A helical membrane pass occupies residues 62–89 (VASVFLLNLALADLCFLLTLPLWAVYTA). Over 90 to 98 (MEYRWPFGN) the chain is Extracellular. Residues 99–125 (YLCKIASGSVSFNLYASVFLLTCLSID) form a helical membrane-spanning segment. The Cytoplasmic segment spans residues 126 to 141 (RYLAIVHPMKSRLRRT). A helical membrane pass occupies residues 142–165 (MLVAKVTCIIIWLLAGLASLPTII). Topologically, residues 166–190 (HRNVFFIENTNITVCAFHYESQNST) are extracellular. An angiotensin II-binding site is contributed by Arg167. An N-linked (GlcNAc...) asparagine glycan is attached at Asn176. Angiotensin II contacts are provided by Phe182, His183, and Tyr184. Asn188 carries N-linked (GlcNAc...) asparagine glycosylation. The chain crosses the membrane as a helical span at residues 191-216 (LPVGLGLTKNILGFLFPFLIILTSYT). Angiotensin II is bound at residue Lys199. The Cytoplasmic segment spans residues 217–239 (LIWKTLKKAYEIQKNKPRKDDIF). A helical transmembrane segment spans residues 240–268 (KIILAIVLFFFFSWVPHQIFTFMDVLIQL). The Extracellular segment spans residues 269-278 (GLIRDCKIED). Residues 279 to 304 (IVDTAMPITICLAYFNNCLNPPFYGF) traverse the membrane as a helical segment. Residues 305-359 (LGKKFKKYFLQLLKYIPPKAKSHSNLSTKMSTLSYRPSENGNSSTKKPAPCTEVE) are Cytoplasmic-facing. The span at 335–350 (STLSYRPSENGNSSTK) shows a compositional bias: polar residues. The tract at residues 335–359 (STLSYRPSENGNSSTKKPAPCTEVE) is disordered. The S-palmitoyl cysteine moiety is linked to residue Cys355.

This sequence belongs to the G-protein coupled receptor 1 family. As to quaternary structure, interacts with MAS1. Interacts with ARRB1. Interacts with FLNA (via filamin repeat 21); increases PKA-mediated phosphorylation of FLNA. In terms of processing, C-terminal Ser or Thr residues may be phosphorylated.

The protein localises to the cell membrane. Its function is as follows. Receptor for angiotensin II, a vasoconstricting peptide, which acts as a key regulator of blood pressure and sodium retention by the kidney. The activated receptor in turn couples to G-alpha proteins G(q) (GNAQ, GNA11, GNA14 or GNA15) and thus activates phospholipase C and increases the cytosolic Ca(2+) concentrations, which in turn triggers cellular responses such as stimulation of protein kinase C. In Ovis aries (Sheep), this protein is Type-1 angiotensin II receptor (AGTR1).